The following is an 872-amino-acid chain: MSILTRWLLIPPVNARLIGRYRDYRRHGASAFSATLGCFWMILAWIFIPLEHPRWQRIRAEHKNLYPHINASRPRPLDPVRYLIQTCWLLIGASRKETPKPRRRAFSGLQNIRGRYHQWMNELPERVSHKTQHLDEKKELGHLSAGARRLILGIIVTFSLILALICVTQPFNPLAQFIFLMLLWGVALIVRRMPGRFSALMLIVLSLTVSCRYIWWRYTSTLNWDDPVSLVCGLILLFAETYAWIVLVLGYFQVVWPLNRQPVPLPKDMSLWPSVDIFVPTYNEDLNVVKNTIYASLGIDWPKDKLNIWILDDGGREEFRQFAQNVGVKYIARTTHEHAKAGNINNALKYAKGEFVSIFDCDHVPTRSFLQMTMGWFLKEKQLAMMQTPHHFFSPDPFERNLGRFRKTPNEGTLFYGLVQDGNDMWDATFFCGSCAVIRRKPLDEIGGIAVETVTEDAHTSLRLHRRGYTSAYMRIPQAAGLATESLSAHIGQRIRWARGMVQIFRLDNPLTGKGLKFAQRLCYVNAMFHFLSGIPRLIFLTAPLAFLLLHAYIIYAPALMIALFVLPHMIHASLTNSKIQGKYRHSFWSEIYETVLAWYIAPPTLVALINPHKGKFNVTAKGGLVEEEYVDWVISRPYIFLVLLNLVGVAVGIWRYFYGPPTEMLTVVVSMVWVFYNLIVLGGAVAVSVESKQVRRSHRVEMTMPAAIAREDGHLFSCTVQDFSDGGLGIKINGQAQILEGQKVNLLLKRGQQEYVFPTQVARVMGNEVGLKLMPLTTQQHIDFVQCTFARADTWALWQDSYPEDKPLESLLDILKLGFRGYRHLAEFAPSSVKGIFRVLTSLVSWVVSFIPRRPERSETAQPSDQALAQQ.

Helical transmembrane passes span 30-50 (SAFS…FIPL), 151-171 (ILGI…TQPF), 173-193 (PLAQ…VRRM), and 230-250 (LVCG…LVLG). The interval 271–364 (LWPSVDIFVP…FVSIFDCDHV (94 aa)) is catalytic subdomain A. The active site involves Asp313. The substrate site is built by Asp360 and Asp362. Residues 441–501 (KPLDEIGGIA…GQRIRWARGM (61 aa)) are catalytic subdomain B. The active site involves Asp457. The next 5 helical transmembrane spans lie at 525 to 545 (VNAM…TAPL), 547 to 567 (FLLL…LFVL), 592 to 612 (IYET…LINP), 640 to 660 (IFLV…YFYG), and 668 to 688 (VVVS…AVAV). Positions 694 to 790 (QVRRSHRVEM…QHIDFVQCTF (97 aa)) constitute a PilZ domain. The chain crosses the membrane as a helical span at residues 833 to 853 (SVKGIFRVLTSLVSWVVSFIP).

This sequence belongs to the glycosyltransferase 2 family. Mg(2+) is required as a cofactor.

The protein localises to the cell inner membrane. The catalysed reaction is [(1-&gt;4)-beta-D-glucosyl](n) + UDP-alpha-D-glucose = [(1-&gt;4)-beta-D-glucosyl](n+1) + UDP + H(+). Its pathway is glycan metabolism; bacterial cellulose biosynthesis. Its activity is regulated as follows. Activated by bis-(3'-5') cyclic diguanylic acid (c-di-GMP). Catalytic subunit of cellulose synthase. It polymerizes uridine 5'-diphosphate glucose to cellulose, which is produced as an extracellular component for mechanical and chemical protection at the onset of the stationary phase, when the cells exhibit multicellular behavior (rdar morphotype). Coexpression of cellulose and thin aggregative fimbriae (curli fimbrae or fibers) leads to a hydrophobic network with tightly packed cells embedded in a highly inert matrix that confers cohesion, elasticity and tissue-like properties to colonies. This is Cellulose synthase catalytic subunit [UDP-forming] (bcsA) from Escherichia coli (strain K12).